The primary structure comprises 408 residues: UDP-N-acetylglucosamine--dolichyl-phosphate N-acetylglucosaminephosphotransferase (408 aa).

Over 1–10 (MWAFPELPLP) the chain is Lumenal. Residues 11-38 (LLVNLFGSLLGFVATVTLIPAFRSHFIA) traverse the membrane as a helical segment. Topologically, residues 39-58 (ARLCGQDLNKLSRQQIPESQ) are cytoplasmic. UDP-N-acetyl-alpha-D-glucosamine is bound by residues 44–46 (QDL) and Glu-56. A helical membrane pass occupies residues 59–78 (GVICGAVFLIILFCFIPFPF). The Lumenal segment spans residues 79–91 (LNCFVEEQCKAFP). Residues 92–118 (HHEFVALIGALLAICCMIFLGFADDVL) form a helical membrane-spanning segment. Over 119–121 (NLP) the chain is Cytoplasmic. The chain crosses the membrane as a helical span at residues 122–143 (WRHKLLLPTAASLPLLMVYFTN). Residue Lys-125 coordinates dolichyl phosphate. The Lumenal segment spans residues 144 to 166 (FGNTTIVVPKPFRWILGLHLDLG). N-linked (GlcNAc...) asparagine glycosylation is present at Asn-146. Residues 167-186 (ILYYVYMGLLAVFCTNAINI) form a helical membrane-spanning segment. Residue 178 to 186 (VFCTNAINI) coordinates dolichyl phosphate. Residue Asn-185 participates in Mg(2+) binding. The Cytoplasmic portion of the chain corresponds to 187–192 (LAGING). A UDP-N-acetyl-alpha-D-glucosamine-binding site is contributed by Asn-191. Residues 193–213 (LEAGQSLVISASIIVFNLVEL) form a helical membrane-spanning segment. At 214 to 218 (EGDYR) the chain is on the lumenal side. The chain crosses the membrane as a helical span at residues 219-242 (DDHVFSLYFMIPFFFTTLGLLYHN). Over 243–250 (WYPSQVFV) the chain is Cytoplasmic. Residues 251 to 269 (GDTFCYFAGMTFAVVGILG) traverse the membrane as a helical segment. Asp-252 contributes to the Mg(2+) binding site. The Lumenal portion of the chain corresponds to 270–271 (HF). A helical membrane pass occupies residues 272–293 (SKTMLLFFIPQVFNFLYSLPQL). Residues 294-375 (LHAIPCPRHR…LLLKIFGPIH (82 aa)) lie on the Cytoplasmic side of the membrane. A UDP-N-acetyl-alpha-D-glucosamine-binding site is contributed by 301–303 (RHR). The helical transmembrane segment at 376–400 (ERNLTLLLLLLQILSSAVTFSIRYQ) threads the bilayer. Residues 401 to 408 (LVRLFYDV) are Lumenal-facing.

This sequence belongs to the glycosyltransferase 4 family. As to quaternary structure, homodimer. Mg(2+) serves as cofactor.

The protein localises to the endoplasmic reticulum membrane. It carries out the reaction a di-trans,poly-cis-dolichyl phosphate + UDP-N-acetyl-alpha-D-glucosamine = an N-acetyl-alpha-D-glucosaminyl-diphospho-di-trans,poly-cis-dolichol + UMP. It functions in the pathway protein modification; protein glycosylation. Inhibited by natural nucleoside antibiotic tunicamycin, which acts as a structural analog and competitor of UDP-GlcNAc. UDP-N-acetylglucosamine--dolichyl-phosphate N-acetylglucosaminephosphotransferase that operates in the biosynthetic pathway of dolichol-linked oligosaccharides, the glycan precursors employed in protein asparagine (N)-glycosylation. The assembly of dolichol-linked oligosaccharides begins on the cytosolic side of the endoplasmic reticulum membrane and finishes in its lumen. The sequential addition of sugars to dolichol pyrophosphate produces dolichol-linked oligosaccharides containing fourteen sugars, including two GlcNAcs, nine mannoses and three glucoses. Once assembled, the oligosaccharide is transferred from the lipid to nascent proteins by oligosaccharyltransferases. Catalyzes the initial step of dolichol-linked oligosaccharide biosynthesis, transfering GlcNAc-1-P from cytosolic UDP-GlcNAc onto the carrier lipid dolichyl phosphate (P-dolichol), yielding GlcNAc-P-P-dolichol embedded in the cytoplasmic leaflet of the endoplasmic reticulum membrane. This Cricetulus longicaudatus (Long-tailed dwarf hamster) protein is UDP-N-acetylglucosamine--dolichyl-phosphate N-acetylglucosaminephosphotransferase (DPAGT1).